Reading from the N-terminus, the 253-residue chain is uncharacterized protein (253 aa).

The span at 1-14 (MKVPILSRLRSLSS) shows a compositional bias: low complexity. Disordered stretches follow at residues 1 to 192 (MKVP…PKSS) and 212 to 253 (PETV…AIQL). Basic and acidic residues-rich tracts occupy residues 17 to 30 (RNNE…EHQV) and 45 to 60 (KSDK…KSGE). Composition is skewed to low complexity over residues 63–104 (PSTP…GSDS) and 111–154 (KTLS…QTPR). Polar residues predominate over residues 215-235 (VVTSTPRQQSRPPSAQNTPNF). Positions 236-253 (TSQGGSRSTSRRQSAIQL) are enriched in low complexity.

This is an uncharacterized protein from Dictyostelium discoideum (Social amoeba).